The primary structure comprises 297 residues: Coiled-coil domain-containing protein 196 (297 aa).

Positions 83–117 (ESSVMELLKEAEEMKQNLERKNKMLRKEMEMLWNK) form a coiled coil. Residues 122–161 (EELSDQQKAPQTKNKADLQDGKAPKSPSSPRKTESELEKS) form a disordered region. 2 stretches are compositionally biased toward basic and acidic residues: residues 135–144 (NKADLQDGKA) and 152–161 (RKTESELEKS).

The protein is Coiled-coil domain-containing protein 196 of Homo sapiens (Human).